Reading from the N-terminus, the 25-residue chain is GLVASIGRALGGLLADVVKSKEQPA.

In terms of tissue distribution, expressed by the skin parotoid and/or rostral glands.

It localises to the secreted. Its function is as follows. Antibacterial peptide, that adopts an alpha helical conformation which can disrupt bacterial membranes. Each caerin displays a different antimicrobial specificity. The chain is Caerin-2.5 from Ranoidea gilleni (Centralian tree frog).